The chain runs to 77 residues: Beta-defensin 135 (77 aa).

Residues 1-24 form the signal peptide; it reads MATRSVLLALVVLNLLFYVPPGRS. 3 disulfides stabilise this stretch: cysteine 37-cysteine 64, cysteine 44-cysteine 58, and cysteine 48-cysteine 65.

The protein belongs to the beta-defensin family.

It localises to the secreted. Functionally, has antibacterial activity. This chain is Beta-defensin 135 (DEFB135), found in Homo sapiens (Human).